We begin with the raw amino-acid sequence, 618 residues long: Dihydroxy-acid dehydratase (618 aa).

Mg(2+) is bound at residue Asp81. Cys122 serves as a coordination point for [2Fe-2S] cluster. Mg(2+) is bound by residues Asp123 and Lys124. Lys124 carries the post-translational modification N6-carboxylysine. Cys195 provides a ligand contact to [2Fe-2S] cluster. Glu490 contributes to the Mg(2+) binding site. Ser516 acts as the Proton acceptor in catalysis.

The protein belongs to the IlvD/Edd family. In terms of assembly, homodimer. [2Fe-2S] cluster is required as a cofactor. Requires Mg(2+) as cofactor.

The catalysed reaction is (2R)-2,3-dihydroxy-3-methylbutanoate = 3-methyl-2-oxobutanoate + H2O. The enzyme catalyses (2R,3R)-2,3-dihydroxy-3-methylpentanoate = (S)-3-methyl-2-oxopentanoate + H2O. It participates in amino-acid biosynthesis; L-isoleucine biosynthesis; L-isoleucine from 2-oxobutanoate: step 3/4. It functions in the pathway amino-acid biosynthesis; L-valine biosynthesis; L-valine from pyruvate: step 3/4. Functions in the biosynthesis of branched-chain amino acids. Catalyzes the dehydration of (2R,3R)-2,3-dihydroxy-3-methylpentanoate (2,3-dihydroxy-3-methylvalerate) into 2-oxo-3-methylpentanoate (2-oxo-3-methylvalerate) and of (2R)-2,3-dihydroxy-3-methylbutanoate (2,3-dihydroxyisovalerate) into 2-oxo-3-methylbutanoate (2-oxoisovalerate), the penultimate precursor to L-isoleucine and L-valine, respectively. This is Dihydroxy-acid dehydratase from Gluconobacter oxydans (strain 621H) (Gluconobacter suboxydans).